We begin with the raw amino-acid sequence, 379 residues long: GDSL esterase/lipase EXL2 (379 aa).

The N-terminal stretch at 1-35 is a signal peptide; sequence MKRNSINIHHVTSFSSSPFWCVFFLVLLCKTSTNA. An N-linked (GlcNAc...) asparagine glycan is attached at Asn42. Ser54 acts as the Nucleophile in catalysis. Residues Asp358 and His361 contribute to the active site.

Belongs to the 'GDSL' lipolytic enzyme family.

It localises to the secreted. In Arabidopsis thaliana (Mouse-ear cress), this protein is GDSL esterase/lipase EXL2 (EXL2).